The primary structure comprises 295 residues: Transcription factor MYB34 (295 aa).

HTH myb-type domains are found at residues 9–61 (EEGI…ANYL) and 62–116 (RPDI…KKRL). 2 consecutive DNA-binding regions (H-T-H motif) follow at residues 37–61 (WRTLPEKAGLKRCGKSCRLRWANYL) and 89–112 (WAAIATSLAGRTDNEIKNYWNTNL).

In terms of assembly, can form complexes with MYC2, MYC3 or MYC4. Expressed in trichomes.

The protein resides in the nucleus. Functionally, transcription factor involved in tryptophan gene activation and in indole-3-acetic acid (IAA) and indolic glucosinolates (IG) biosynthesis. Acts as a direct transcriptional activator of both Trp synthesis genes and Trp secondary metabolism genes. In Arabidopsis thaliana (Mouse-ear cress), this protein is Transcription factor MYB34 (MYB34).